We begin with the raw amino-acid sequence, 405 residues long: Phosphatidylinositol 5-phosphate 4-kinase type-2 alpha (405 aa).

The residue at position 2 (Ala-2) is an N-acetylalanine. Thr-3 bears the Phosphothreonine mark. A Phosphoserine modification is found at Ser-14. The PIPK domain maps to 33-405 (ASDPLLSVLM…RFLDFIGHIL (373 aa)). A required for interaction with PIP5K1A region spans residues 59-65 (VMLMPDD). N6-acetyllysine occurs at positions 89 and 145. A disordered region spans residues 288–328 (QEEVECEENDGEEEGESDSTHPIGTPPDSPGNTLNSSPPLA). Over residues 289–304 (EEVECEENDGEEEGES) the composition is skewed to acidic residues.

Homodimer. Interacts with PIP4K2B; the interaction may regulate localization to the nucleus. Probably interacts with PIP5K1A; the interaction inhibits PIP5K1A kinase activity. Phosphorylated in tyrosines. Phosphorylation is induced by light and increases kinase activity. In terms of tissue distribution, detected in rod photoreceptor cells.

The protein localises to the cell membrane. The protein resides in the nucleus. Its subcellular location is the lysosome. It is found in the cytoplasm. It localises to the photoreceptor inner segment. The protein localises to the cell projection. The protein resides in the cilium. Its subcellular location is the photoreceptor outer segment. It catalyses the reaction a 1,2-diacyl-sn-glycero-3-phospho-(1D-myo-inositol-5-phosphate) + ATP = a 1,2-diacyl-sn-glycero-3-phospho-(1D-myo-inositol-4,5-bisphosphate) + ADP + H(+). The catalysed reaction is 1,2-dihexadecanoyl-sn-glycero-3-phospho-(1D-myo-inositol-5-phosphate) + ATP = 1,2-dihexadecanoyl-sn-glycero-3-phospho-(1D-myo-inositol-4,5-bisphosphate) + ADP + H(+). It carries out the reaction 1,2-dihexadecanoyl-sn-glycero-3-phospho-(1D-myo-inositol-5-phosphate) + GTP = 1,2-dihexadecanoyl-sn-glycero-3-phospho-(1D-myo-inositol-4,5-bisphosphate) + GDP + H(+). Its activity is regulated as follows. In rod outer segments, activated by light. In terms of biological role, catalyzes the phosphorylation of phosphatidylinositol 5-phosphate (PtdIns5P) on the fourth hydroxyl of the myo-inositol ring, to form phosphatidylinositol 4,5-bisphosphate (PtdIns(4,5)P2). Has both ATP- and GTP-dependent kinase activities. May exert its function by regulating the levels of PtdIns5P, which functions in the cytosol by increasing AKT activity and in the nucleus signals through ING2. May regulate the pool of cytosolic PtdIns5P in response to the activation of tyrosine phosphorylation. Required for lysosome-peroxisome membrane contacts and intracellular cholesterol transport through modulating peroxisomal PtdIns(4,5)P2 level. In collaboration with PIP4K2B, has a role in mediating autophagy in times of nutrient stress. Required for autophagosome-lysosome fusion and the regulation of cellular lipid metabolism. Negatively regulates insulin signaling through a catalytic-independent mechanism. PIP4Ks interact with PIP5Ks and suppress PIP5K-mediated PtdIns(4,5)P2 synthesis and insulin-dependent conversion to PtdIns(3,4,5)P3. May be involved in thrombopoiesis, and the terminal maturation of megakaryocytes and regulation of their size. This is Phosphatidylinositol 5-phosphate 4-kinase type-2 alpha from Mus musculus (Mouse).